Reading from the N-terminus, the 348-residue chain is NADH-quinone oxidoreductase subunit H (348 aa).

A run of 8 helical transmembrane segments spans residues 7–27, 82–102, 115–135, 161–181, 199–219, 251–271, 287–307, and 322–342; these read IWLLPLLIIVGKTLLLLVVLL, GVFLLAPFVSATLALSTWAVI, VGLLYILAISSLEVYGVIMGG, IGFVLVTVILVSGSLDLTTIV, FLDWNWLVLFPMFIIFFISAL, LFFLGEYVAIVLMCALTTILF, VPGIIWFVLKVCFVFFWFAMV, and LGWKVFLPFSLAMVVITATFL.

Belongs to the complex I subunit 1 family. NDH-1 is composed of 14 different subunits. Subunits NuoA, H, J, K, L, M, N constitute the membrane sector of the complex.

It localises to the cell inner membrane. It catalyses the reaction a quinone + NADH + 5 H(+)(in) = a quinol + NAD(+) + 4 H(+)(out). In terms of biological role, NDH-1 shuttles electrons from NADH, via FMN and iron-sulfur (Fe-S) centers, to quinones in the respiratory chain. The immediate electron acceptor for the enzyme in this species is believed to be ubiquinone. Couples the redox reaction to proton translocation (for every two electrons transferred, four hydrogen ions are translocated across the cytoplasmic membrane), and thus conserves the redox energy in a proton gradient. This subunit may bind ubiquinone. The chain is NADH-quinone oxidoreductase subunit H from Bartonella quintana (strain Toulouse) (Rochalimaea quintana).